Consider the following 59-residue polypeptide: Large ribosomal subunit protein uL30 (59 aa).

The protein belongs to the universal ribosomal protein uL30 family. In terms of assembly, part of the 50S ribosomal subunit.

In Leptospira interrogans serogroup Icterohaemorrhagiae serovar copenhageni (strain Fiocruz L1-130), this protein is Large ribosomal subunit protein uL30.